The primary structure comprises 320 residues: L-lactate dehydrogenase (320 aa).

Residues V19, D40, R45, and 85–86 contribute to the NAD(+) site; that span reads GA. Residues Q88 and R94 each contribute to the substrate site. NAD(+)-binding positions include S107, 124–126, and S149; that span reads ITN. Substrate is bound at residue 126 to 129; sequence NPVD. 154–157 lines the substrate pocket; it reads DSAR. Beta-D-fructose 1,6-bisphosphate is bound by residues R159 and H174. The active-site Proton acceptor is H181. Y228 carries the post-translational modification Phosphotyrosine. A substrate-binding site is contributed by T237.

It belongs to the LDH/MDH superfamily. LDH family. As to quaternary structure, homotetramer.

The protein localises to the cytoplasm. The enzyme catalyses (S)-lactate + NAD(+) = pyruvate + NADH + H(+). The protein operates within fermentation; pyruvate fermentation to lactate; (S)-lactate from pyruvate: step 1/1. With respect to regulation, allosterically activated by fructose 1,6-bisphosphate (FBP). In terms of biological role, catalyzes the conversion of lactate to pyruvate. The polypeptide is L-lactate dehydrogenase (Bifidobacterium animalis subsp. lactis (strain AD011)).